The following is a 382-amino-acid chain: Nitric oxide reductase FlRd-NAD(+) reductase (382 aa).

The protein belongs to the FAD-dependent oxidoreductase family. FAD is required as a cofactor.

Its subcellular location is the cytoplasm. The catalysed reaction is 2 reduced [nitric oxide reductase rubredoxin domain] + NAD(+) + H(+) = 2 oxidized [nitric oxide reductase rubredoxin domain] + NADH. It functions in the pathway nitrogen metabolism; nitric oxide reduction. Functionally, one of at least two accessory proteins for anaerobic nitric oxide (NO) reductase. Reduces the rubredoxin moiety of NO reductase. This Vibrio vulnificus (strain CMCP6) protein is Nitric oxide reductase FlRd-NAD(+) reductase.